Consider the following 414-residue polypeptide: Snake venom metalloproteinase atrolysin-B (414 aa).

An N-terminal signal peptide occupies residues 1–20; that stretch reads MIEVLLVTICLAVFPYQGSS. A propeptide spanning residues 21–190 is cleaved from the precursor; sequence IILESGNVND…KASDLNLNPD (170 aa). Position 191 is a pyrrolidone carboxylic acid (Gln-191). The 197-residue stretch at 197 to 393 folds into the Peptidase M12B domain; sequence RYIELVVVAD…YKPQCILNKP (197 aa). Glu-200 and Asp-284 together coordinate Ca(2+). Disulfide bonds link Cys-308-Cys-388 and Cys-348-Cys-355. A Zn(2+)-binding site is contributed by His-333. Residue Glu-334 is part of the active site. His-337 and His-343 together coordinate Zn(2+). Positions 388, 391, 403, 406, 408, 410, and 413 each coordinate Ca(2+). A propeptide spanning residues 394–414 is cleaved from the precursor; sequence LRIDPVSTPVSGNELLEAGEE.

This sequence belongs to the venom metalloproteinase (M12B) family. P-I subfamily. In terms of assembly, monomer. Zn(2+) is required as a cofactor. In terms of processing, the N-terminus is blocked. In terms of tissue distribution, expressed by the venom gland.

Its subcellular location is the secreted. It carries out the reaction Cleavage of 5-His-|-Leu-6, 10-His-|-Leu-11, 14-Ala-|-Leu-15, 16-Tyr-|-Leu-17 and 23-Gly-|-Phe-24 of insulin B chain. Identical to the cleavage of insulin B chain by atrolysin C. Also cleaves Xaa-|-Ser bonds in glucagon.. In terms of biological role, snake venom metalloproteinase that impairs hemostasis in the envenomed animal. The sequence is that of Snake venom metalloproteinase atrolysin-B from Crotalus atrox (Western diamondback rattlesnake).